Here is a 263-residue protein sequence, read N- to C-terminus: Putative TATA-binding protein pB263R (263 aa).

It belongs to the asfivirus B263R family.

Functionally, putative TATA-binding protein. This chain is Putative TATA-binding protein pB263R, found in African swine fever virus (isolate Warthog/Namibia/Wart80/1980) (ASFV).